A 497-amino-acid chain; its full sequence is Bloodstream-specific protein 2 (497 aa).

Residues 1-14 form the signal peptide; sequence MRAIFLVALALATM. The region spanning 15 to 124 is the Thioredoxin 1 domain; the sequence is RESTAESLKL…IIKYIKANVG (110 aa). The N-linked (GlcNAc...) asparagine glycan is linked to Asn30. Residues Cys48 and Cys51 are joined by a disulfide bond. N-linked (GlcNAc...) asparagine glycosylation is found at Asn63, Asn85, Asn153, Asn154, Asn250, and Asn278. The Thioredoxin 2 domain occupies 334–455; the sequence is EPTIKSLPVP…VYEFVRKHVT (122 aa). Catalysis depends on nucleophile residues Cys378 and Cys381. Cys378 and Cys381 form a disulfide bridge. 6 N-linked (GlcNAc...) asparagine glycosylation sites follow: Asn413, Asn465, Asn476, Asn482, Asn485, and Asn488. The disordered stretch occupies residues 461-497; the sequence is EKPANVTEEKKSEEENKSSKSNESNDSNESNVDKQDL. Over residues 467–480 the composition is skewed to basic and acidic residues; it reads TEEKKSEEENKSSK. Positions 481–490 are enriched in low complexity; the sequence is SNESNDSNES.

Belongs to the protein disulfide isomerase family.

The chain is Bloodstream-specific protein 2 (BS2) from Trypanosoma brucei brucei.